The following is a 362-amino-acid chain: Histidinol-phosphate aminotransferase (362 aa).

Lys-218 carries the post-translational modification N6-(pyridoxal phosphate)lysine.

The protein belongs to the class-II pyridoxal-phosphate-dependent aminotransferase family. Histidinol-phosphate aminotransferase subfamily. Homodimer. Pyridoxal 5'-phosphate serves as cofactor.

It carries out the reaction L-histidinol phosphate + 2-oxoglutarate = 3-(imidazol-4-yl)-2-oxopropyl phosphate + L-glutamate. It functions in the pathway amino-acid biosynthesis; L-histidine biosynthesis; L-histidine from 5-phospho-alpha-D-ribose 1-diphosphate: step 7/9. The polypeptide is Histidinol-phosphate aminotransferase (Xanthomonas campestris pv. campestris (strain ATCC 33913 / DSM 3586 / NCPPB 528 / LMG 568 / P 25)).